The chain runs to 1242 residues: ATP-dependent helicase/nuclease subunit A (1242 aa).

Positions 12–487 (SRWTDEQWKA…IDLASNFRSR (476 aa)) constitute a UvrD-like helicase ATP-binding domain. 33–40 (AAAGSGKT) lines the ATP pocket. The region spanning 514 to 808 (AAQLKYGADY…RVMTIHSSKG (295 aa)) is the UvrD-like helicase C-terminal domain.

Belongs to the helicase family. AddA subfamily. Heterodimer of AddA and AddB/RexB. It depends on Mg(2+) as a cofactor.

It catalyses the reaction Couples ATP hydrolysis with the unwinding of duplex DNA by translocating in the 3'-5' direction.. The enzyme catalyses ATP + H2O = ADP + phosphate + H(+). In terms of biological role, the heterodimer acts as both an ATP-dependent DNA helicase and an ATP-dependent, dual-direction single-stranded exonuclease. Recognizes the chi site generating a DNA molecule suitable for the initiation of homologous recombination. The AddA nuclease domain is required for chi fragment generation; this subunit has the helicase and 3' -&gt; 5' nuclease activities. This Geobacillus thermodenitrificans (strain NG80-2) protein is ATP-dependent helicase/nuclease subunit A.